The primary structure comprises 435 residues: IAA-amino acid hydrolase ILR1-like 5 (435 aa).

The first 25 residues, 1–25 (MSFCKLVSFVLILHLLNSCLISCSS), serve as a signal peptide directing secretion. Mn(2+) is bound by residues Cys-134, His-136, Glu-170, His-194, and His-397. The short motif at 432–435 (KDEL) is the Prevents secretion from ER element.

The protein belongs to the peptidase M20 family.

The protein resides in the endoplasmic reticulum lumen. In terms of biological role, hydrolyzes certain amino acid conjugates of the plant growth regulator indole-3-acetic acid (IAA). The chain is IAA-amino acid hydrolase ILR1-like 5 from Arabidopsis thaliana (Mouse-ear cress).